Consider the following 655-residue polypeptide: Endoplasmic reticulum chaperone BiP (655 aa).

An N-terminal signal peptide occupies residues 1–19 (MMKFTVVAAALLLLGAVRA). Positions 1–81 (MMKFTVVAAA…EGERLIGDAA (81 aa)) are required for interaction with ELAPOR1. 37 to 40 (GTTY) contributes to the ATP binding site. The residue at position 87 (Ser87) is a Phosphoserine. Lys97 is an ATP binding site. Residue Lys126 is modified to N6-acetyllysine. Positions 126-281 (KPYIQVDIGG…KKKTGKDVRK (156 aa)) are nucleotide-binding (NBD). Residue Tyr161 is modified to 3'-nitrotyrosine. Lys214 is subject to N6-acetyllysine. Position 228 to 230 (228 to 230 (GGT)) interacts with ATP. Lys272 carries the N6-acetyllysine modification. Residue 294–301 (EKAKRALS) participates in ATP binding. Lys327 bears the N6-acetyllysine mark. Lys353 participates in a covalent cross-link: Glycyl lysine isopeptide (Lys-Gly) (interchain with G-Cter in SUMO2). Position 354 is an N6-acetyllysine; alternate (Lys354). A Glycyl lysine isopeptide (Lys-Gly) (interchain with G-Cter in SUMO1); alternate cross-link involves residue Lys354. 365–368 (GSTR) provides a ligand contact to ATP. An interdomain linker region spans residues 410–420 (QDTGDLVLLDV). The tract at residues 421 to 501 (CPLTLGIETV…PRGVPQIEVT (81 aa)) is substrate-binding (SBD). Lys448 is modified (N6-succinyllysine). Position 493 is an omega-N-methylarginine (Arg493). Thr519 bears the O-AMP-threonine; alternate mark. Thr519 is subject to Phosphothreonine; alternate. Lys586 is modified (N6,N6,N6-trimethyllysine; by METTL21A; in vitro). Residue Lys586 is modified to N6,N6-dimethyllysine; alternate. At Lys586 the chain carries N6-methyllysine; alternate. Lys592 carries the N6-methyllysine modification. The interval 632 to 655 (ISKLYGSGGPPPTGEEDTSEKDEL) is disordered. A phosphothreonine mark is found at Thr644 and Thr649. A compositionally biased stretch (acidic residues) spans 645–655 (GEEDTSEKDEL). At Ser650 the chain carries Phosphoserine. The Prevents secretion from ER motif lies at 652–655 (KDEL).

Belongs to the heat shock protein 70 family. As to quaternary structure, monomer and homooligomer; homooligomerization via the interdomain linker inactivates the chaperone activity and acts as a storage of HSPA5/BiP molecules. Interacts with DNAJC1 (via J domain). Component of an EIF2 complex at least composed of CELF1/CUGBP1, CALR, CALR3, EIF2S1, EIF2S2, HSP90B1 and HSPA5. Part of a large chaperone multiprotein complex comprising DNAJB11, HSP90B1, HSPA5, HYOU, PDIA2, PDIA4, PDIA6, PPIB, SDF2L1, UGGT1 and very small amounts of ERP29, but not, or at very low levels, CALR nor CANX. Interacts with TMEM132A and TRIM21. May form a complex with ERLEC1, OS9, SEL1L and SYVN1. Interacts with DNAJC10. Interacts with DNAJB9/ERdj4; leading to recruit HSPA5/BiP to ERN1/IRE1. Interacts with ERN1/IRE1 (via luminal domain); the interaction takes place following interaction with DNAJB9/ERdj4 and leads to inactivate ERN1/IRE1, the interaction also competitively inhibits ERN1 interaction with MANF. Interacts directly with MANF (via SAP domain); the interaction inhibits ATP binding to HSPA5/BiP and subsequent nucleotide exchange. Interacts with ERN1 (via luminal domain); the interaction competitively inhibits ERN1 interaction with MANF. Interacts with EIF2AK3/PERK (via luminal domain); interaction leads to inactivate EIF2AK3/PERK. Interacts with MX1. Interacts with METTL23. Interacts with CEMIP; the interaction induces calcium leakage from the endoplasmic reticulum and cell migration. Interacts with PCSK4 form; the interaction takes place in the endoplasmic reticulum. Interacts with CIPC. Interacts with CCDC88B (via C-terminus); the interaction opposes ERN1-mediated JNK activation, protecting against apoptosis. Interacts with INPP5K; necessary for INPP5K localization at the endoplasmic reticulum. Interacts with MANF; the interaction is direct. Interacts with LOXL2; leading to activate the ERN1/IRE1-XBP1 pathway of the unfolded protein response. Interacts with CLU under stressed condition; interaction increases CLU protein stability; facilitates its retrotranslocation and redistribution to the mitochondria; cooperatively suppress stress-induced apoptosis by stabilizing mitochondrial membrane integrity. Interacts with CCDC47. Interacts with CLN3. Interacts with ELAPOR1; may regulate the function of HSPA5 in apoptosis and cell proliferation. Interacts with CASP7. Interacts with ILDR2; the interaction stabilizes ILDR2 expression. Interacts with ADAM7. In unstressed cells, AMPylation at Thr-519 by FICD inactivates the chaperome activity: AMPylated form is locked in a relatively inert state and only weakly stimulated by J domain-containing proteins. In response to endoplasmic reticulum stress, de-AMPylation by the same protein, FICD, restores the chaperone activity. Expressed in sperm (at protein level).

It is found in the endoplasmic reticulum lumen. The protein localises to the melanosome. The protein resides in the cytoplasm. It localises to the cell surface. The catalysed reaction is ATP + H2O = ADP + phosphate + H(+). With respect to regulation, the chaperone activity is regulated by ATP-induced allosteric coupling of the nucleotide-binding (NBD) and substrate-binding (SBD) domains. In the ADP-bound and nucleotide-free (apo) states, the two domains have little interaction. In contrast, in the ATP-bound state the two domains are tightly coupled, which results in drastically accelerated kinetics in both binding and release of polypeptide substrates. J domain-containing co-chaperones (DNAJB9/ERdj4 or DNAJC10/ERdj5) stimulate the ATPase activity and are required for efficient substrate recognition by HSPA5/BiP. Homooligomerization inactivates participating HSPA5/BiP protomers and probably act as reservoirs to store HSPA5/BiP molecules when they are not needed by the cell. Its function is as follows. Endoplasmic reticulum chaperone that plays a key role in protein folding and quality control in the endoplasmic reticulum lumen. Involved in the correct folding of proteins and degradation of misfolded proteins via its interaction with DNAJC10/ERdj5, probably to facilitate the release of DNAJC10/ERdj5 from its substrate. Acts as a key repressor of the EIF2AK3/PERK and ERN1/IRE1-mediated unfolded protein response (UPR). In the unstressed endoplasmic reticulum, recruited by DNAJB9/ERdj4 to the luminal region of ERN1/IRE1, leading to disrupt the dimerization of ERN1/IRE1, thereby inactivating ERN1/IRE1. Also binds and inactivates EIF2AK3/PERK in unstressed cells. Accumulation of misfolded protein in the endoplasmic reticulum causes release of HSPA5/BiP from ERN1/IRE1 and EIF2AK3/PERK, allowing their homodimerization and subsequent activation. Plays an auxiliary role in post-translational transport of small presecretory proteins across endoplasmic reticulum (ER). May function as an allosteric modulator for SEC61 channel-forming translocon complex, likely cooperating with SEC62 to enable the productive insertion of these precursors into SEC61 channel. Appears to specifically regulate translocation of precursors having inhibitory residues in their mature region that weaken channel gating. May also play a role in apoptosis and cell proliferation. The polypeptide is Endoplasmic reticulum chaperone BiP (Mus musculus (Mouse)).